Consider the following 82-residue polypeptide: Large ribosomal subunit protein bL27 (82 aa).

Residues 1–21 (MAHKKGASSSRNGRDSNAKRL) are disordered.

It belongs to the bacterial ribosomal protein bL27 family.

This is Large ribosomal subunit protein bL27 from Tropheryma whipplei (strain Twist) (Whipple's bacillus).